The primary structure comprises 190 residues: Potassium-transporting ATPase KdpC subunit (190 aa).

A helical transmembrane segment spans residues 10 to 30; sequence TFLFLLLITGGVYPLLTTALG.

The protein belongs to the KdpC family. As to quaternary structure, the system is composed of three essential subunits: KdpA, KdpB and KdpC.

The protein resides in the cell inner membrane. In terms of biological role, part of the high-affinity ATP-driven potassium transport (or Kdp) system, which catalyzes the hydrolysis of ATP coupled with the electrogenic transport of potassium into the cytoplasm. This subunit acts as a catalytic chaperone that increases the ATP-binding affinity of the ATP-hydrolyzing subunit KdpB by the formation of a transient KdpB/KdpC/ATP ternary complex. The sequence is that of Potassium-transporting ATPase KdpC subunit from Escherichia coli O45:K1 (strain S88 / ExPEC).